Consider the following 413-residue polypeptide: Protein PHR1-LIKE 1 (413 aa).

Disordered stretches follow at residues 171–196 (SEPN…TPFL) and 208–233 (QQQM…SKQR). 2 stretches are compositionally biased toward polar residues: residues 181-191 (DSSSHNPNSEI) and 208-231 (QQQM…ATSK). An HTH myb-type domain is found at 228-288 (ATSKQRMRWT…HLQKYRTARY (61 aa)). The H-T-H motif DNA-binding region spans 259 to 284 (PKAVLKLLNNPGLTIYHVKSHLQKYR). The interval 322-342 (TQALRLQMEVQKRLHEQLEIQ) is coiled coil. The short motif at 335–340 (LHEQLE) is the LHEQLE element. The segment at 363 to 413 (QQKIQDNKSSSSEASPKQCNGSFAEVEVGLETLTGDQNESASASRKRVRED) is disordered. Polar residues-rich tracts occupy residues 369-383 (NKSS…QCNG) and 396-405 (TGDQNESASA).

Belongs to the MYB-CC family. Homodimers and heterodimers. Interacts with MED25. Does not interact with PHL2 or PHL3. As to expression, expressed in shoots and roots.

It is found in the nucleus. Functionally, transcription factor acting as central integrator of phosphate starvation responses. Regulates FER1 expression upon phosphate starvation, linking iron and phosphate homeostasis. The protein is Protein PHR1-LIKE 1 (PHL1) of Arabidopsis thaliana (Mouse-ear cress).